A 1744-amino-acid chain; its full sequence is Probable disease resistance protein At4g19520 (1744 aa).

Positions 3-163 (DGKEVYISFN…KIVADVRQKL (161 aa)) constitute a TIR 1 domain. The active site involves E80. Residues 192–411 (SLGIWGMAGI…VSEKEIFLDI (220 aa)) enclose the NB-ARC domain. LRR repeat units follow at residues 503-526 (YEDV…AFQH), 557-581 (PPEL…GFQY), 583-602 (VELN…TKNL), 603-626 (EVLK…QYSP), 648-669 (LQHL…PKVP), 670-692 (PSIR…NHSS), 710-733 (DHRK…IVIF), 734-754 (ESLE…QGFP), 755-777 (QNLK…LCHH), 779-802 (SKLV…MSNM), 804-823 (YLAV…KELP), 824-846 (RNLK…LLET), 848-871 (SEVV…MSKL), 892-915 (PLNL…IGDL), 917-939 (LLDT…MHNL), 941-963 (PLKV…LPKV), 987-1010 (YEHR…IRWM), 1011-1035 (PSLK…DFSK), 1037-1059 (LSLR…SLQL), and 1062-1086 (AHGC…TFSN). Positions 1399–1559 (RNNDVFVSFH…KVANDIRKKL (161 aa)) constitute a TIR 2 domain.

It belongs to the disease resistance TIR-NB-LRR family.

It catalyses the reaction NAD(+) + H2O = ADP-D-ribose + nicotinamide + H(+). In terms of biological role, probable disease resistance protein. The protein is Probable disease resistance protein At4g19520 of Arabidopsis thaliana (Mouse-ear cress).